The chain runs to 205 residues: uncharacterized protein (205 aa).

At 1 to 63 (MQRTRELESS…QHPKVAKFLK (63 aa)) the chain is on the cytoplasmic side. A helical membrane pass occupies residues 64–84 (VQLVFDLISLFIFATHQLLLL). At 85–124 (EDGNFGKHYFKRKTKRCSKFSCSRCNANAHHPKWFKFKHS) the chain is on the extracellular side. Residues 125–145 (LLCLGTFCFGVYSLVKINKFF) form a helical membrane-spanning segment. At 146–205 (KTDQTVDLNRLLELFFWQLNAILNMKLFAFYGDHLESHSAPLDVYEDSFANKSSSGGDEV) the chain is on the cytoplasmic side.

It is found in the membrane. This is an uncharacterized protein from Saccharomyces cerevisiae (strain ATCC 204508 / S288c) (Baker's yeast).